Reading from the N-terminus, the 375-residue chain is tRNA-specific 2-thiouridylase MnmA (375 aa).

Residues 18–25 (GMSGGVDS) and M44 contribute to the ATP site. Residues 104 to 106 (NPD) form an interaction with target base in tRNA region. The active-site Nucleophile is C109. C109 and C206 form a disulfide bridge. Residue G134 participates in ATP binding. Residues 156–158 (KDQ) form an interaction with tRNA region. C206 functions as the Cysteine persulfide intermediate in the catalytic mechanism. The segment at 318 to 319 (RY) is interaction with tRNA.

This sequence belongs to the MnmA/TRMU family.

It is found in the cytoplasm. It carries out the reaction S-sulfanyl-L-cysteinyl-[protein] + uridine(34) in tRNA + AH2 + ATP = 2-thiouridine(34) in tRNA + L-cysteinyl-[protein] + A + AMP + diphosphate + H(+). Catalyzes the 2-thiolation of uridine at the wobble position (U34) of tRNA, leading to the formation of s(2)U34. The sequence is that of tRNA-specific 2-thiouridylase MnmA from Colwellia psychrerythraea (strain 34H / ATCC BAA-681) (Vibrio psychroerythus).